A 458-amino-acid chain; its full sequence is UDP-N-acetylmuramate--L-alanine ligase (458 aa).

112–118 provides a ligand contact to ATP; the sequence is GMHGKTT.

The protein belongs to the MurCDEF family.

The protein localises to the cytoplasm. The enzyme catalyses UDP-N-acetyl-alpha-D-muramate + L-alanine + ATP = UDP-N-acetyl-alpha-D-muramoyl-L-alanine + ADP + phosphate + H(+). The protein operates within cell wall biogenesis; peptidoglycan biosynthesis. Its function is as follows. Cell wall formation. The sequence is that of UDP-N-acetylmuramate--L-alanine ligase from Acidobacterium capsulatum (strain ATCC 51196 / DSM 11244 / BCRC 80197 / JCM 7670 / NBRC 15755 / NCIMB 13165 / 161).